The chain runs to 621 residues: Chaperone protein HtpG (621 aa).

An a; substrate-binding region spans residues 1–328; sequence MTQEKKKFDA…SEDLPLNISR (328 aa). The tract at residues 329-544 is b; sequence ESLQHNNVLE…DTAMDIRMER (216 aa). Positions 545-621 are c; that stretch reads FLIEQKQIAS…LNDILQKAIL (77 aa).

The protein belongs to the heat shock protein 90 family. In terms of assembly, homodimer.

It is found in the cytoplasm. Functionally, molecular chaperone. Has ATPase activity. The polypeptide is Chaperone protein HtpG (Rickettsia typhi (strain ATCC VR-144 / Wilmington)).